The following is a 169-amino-acid chain: Peptide methionine sulfoxide reductase MsrA (169 aa).

Cysteine 10 is a catalytic residue.

It belongs to the MsrA Met sulfoxide reductase family.

It catalyses the reaction L-methionyl-[protein] + [thioredoxin]-disulfide + H2O = L-methionyl-(S)-S-oxide-[protein] + [thioredoxin]-dithiol. It carries out the reaction [thioredoxin]-disulfide + L-methionine + H2O = L-methionine (S)-S-oxide + [thioredoxin]-dithiol. Its function is as follows. Has an important function as a repair enzyme for proteins that have been inactivated by oxidation. Catalyzes the reversible oxidation-reduction of methionine sulfoxide in proteins to methionine. This chain is Peptide methionine sulfoxide reductase MsrA, found in Streptococcus pyogenes serotype M2 (strain MGAS10270).